The primary structure comprises 215 residues: ATP-dependent dethiobiotin synthetase BioD (215 aa).

Aspartate 13–isoleucine 18 contributes to the ATP binding site. Threonine 17 is a Mg(2+) binding site. Residue lysine 38 is part of the active site. Position 42 (threonine 42) interacts with substrate. Residues aspartate 50, glutamate 115–glycine 118, and asparagine 175–histidine 176 each bind ATP. Mg(2+) is bound by residues aspartate 50 and glutamate 115.

This sequence belongs to the dethiobiotin synthetase family. Homodimer. The cofactor is Mg(2+).

It localises to the cytoplasm. The enzyme catalyses (7R,8S)-7,8-diammoniononanoate + CO2 + ATP = (4R,5S)-dethiobiotin + ADP + phosphate + 3 H(+). It functions in the pathway cofactor biosynthesis; biotin biosynthesis; biotin from 7,8-diaminononanoate: step 1/2. Functionally, catalyzes a mechanistically unusual reaction, the ATP-dependent insertion of CO2 between the N7 and N8 nitrogen atoms of 7,8-diaminopelargonic acid (DAPA, also called 7,8-diammoniononanoate) to form a ureido ring. The chain is ATP-dependent dethiobiotin synthetase BioD from Neisseria meningitidis serogroup A / serotype 4A (strain DSM 15465 / Z2491).